The following is a 464-amino-acid chain: Argininosuccinate lyase (464 aa).

The protein belongs to the lyase 1 family. Argininosuccinate lyase subfamily.

Its subcellular location is the cytoplasm. The enzyme catalyses 2-(N(omega)-L-arginino)succinate = fumarate + L-arginine. It functions in the pathway amino-acid biosynthesis; L-arginine biosynthesis; L-arginine from L-ornithine and carbamoyl phosphate: step 3/3. The sequence is that of Argininosuccinate lyase from Janthinobacterium sp. (strain Marseille) (Minibacterium massiliensis).